The chain runs to 315 residues: Homoserine kinase (315 aa).

97-107 (PPARGLGSSAT) is a binding site for ATP.

The protein belongs to the GHMP kinase family. Homoserine kinase subfamily.

The protein resides in the cytoplasm. The catalysed reaction is L-homoserine + ATP = O-phospho-L-homoserine + ADP + H(+). Its pathway is amino-acid biosynthesis; L-threonine biosynthesis; L-threonine from L-aspartate: step 4/5. Catalyzes the ATP-dependent phosphorylation of L-homoserine to L-homoserine phosphate. This is Homoserine kinase from Synechococcus sp. (strain WH7803).